Consider the following 137-residue polypeptide: Ig heavy chain V region MOPC 315 (137 aa).

A signal peptide spans 1–18 (MKVLSLLYLLTAIPGIMS). Residues 19-48 (DVQLQESGPGLVKPSQSLSLTCSVTGYSIT) are framework-1. A disulfide bond links C40 and C114. The tract at residues 49–54 (SGYFWN) is complementarity-determining-1. The tract at residues 55–68 (WIRQFPGNKLEWLG) is framework-2. Residues 69-84 (FIKYDGSNGYNPSLKN) are complementarity-determining-2. A framework-3 region spans residues 85 to 116 (RVSITRDTSENQFFLKLNSVTTEDTATYYCAG). The interval 117-126 (DNDHLYYFDY) is complementarity-determining-3. The segment at 127–137 (WGQGTTLTVSS) is framework-4.

The protein is Ig heavy chain V region MOPC 315 of Mus musculus (Mouse).